Consider the following 136-residue polypeptide: Biopolymer transport protein exbD2 (136 aa).

Residues 1 to 23 (MAFSTGGNRGPMADINVTPLVDV) lie on the Cytoplasmic side of the membrane. The chain crosses the membrane as a helical span at residues 24–44 (MLVLLIIFIVTAPIMTYPIAV). Topologically, residues 45 to 136 (DLPQRVLNPP…SQMKKIGFMQ (92 aa)) are periplasmic.

It belongs to the ExbD/TolR family. In terms of assembly, the accessory proteins ExbB and ExbD seem to form a complex with TonB.

The protein resides in the cell inner membrane. Its function is as follows. Involved in the TonB-dependent energy-dependent transport of various receptor-bound substrates. In Xanthomonas campestris pv. campestris (strain ATCC 33913 / DSM 3586 / NCPPB 528 / LMG 568 / P 25), this protein is Biopolymer transport protein exbD2 (exbD2).